We begin with the raw amino-acid sequence, 118 residues long: UPF0102 protein lpp3065 (118 aa).

Belongs to the UPF0102 family.

This Legionella pneumophila (strain Paris) protein is UPF0102 protein lpp3065.